The sequence spans 296 residues: tRNA dimethylallyltransferase (296 aa).

Residue 2–9 coordinates ATP; sequence GPTASGKT. Residue 4–9 coordinates substrate; that stretch reads TASGKT. Interaction with substrate tRNA stretches follow at residues 27–30, 151–155, and 232–237; these read DSAL, QRLSR, and RCVGYR.

The protein belongs to the IPP transferase family. In terms of assembly, monomer. Requires Mg(2+) as cofactor.

The enzyme catalyses adenosine(37) in tRNA + dimethylallyl diphosphate = N(6)-dimethylallyladenosine(37) in tRNA + diphosphate. Functionally, catalyzes the transfer of a dimethylallyl group onto the adenine at position 37 in tRNAs that read codons beginning with uridine, leading to the formation of N6-(dimethylallyl)adenosine (i(6)A). The sequence is that of tRNA dimethylallyltransferase from Shewanella sp. (strain MR-7).